Here is a 283-residue protein sequence, read N- to C-terminus: MKVITKVAELRRALADVRNAEKRIGFVPTMGYLHDGHLALISASREHCDVTVVSIFVNPTQFGPNEDLSRYPRDFARDEALCGSAGVSIIFAPSAEEIYPAQFESFVEPGELAKPLCGAFRPGHFRGVATVVCKLFNMVQPDVAYFGQKDFQQCAVIRRMTVDLNLPIEIVTVPTVREPDGLAMSSRNRYLCPEERDRSLAISRGLFAAAHEFASGERDAATLIALARRHLERVDRLQYLELVDPGTLRIADSPLRYPAVLCVAAYVGSTRLIDNVVLSWSPS.

ATP is bound at residue 30 to 37; sequence MGYLHDGH. Residue His37 is the Proton donor of the active site. Position 61 (Gln61) interacts with (R)-pantoate. Gln61 lines the beta-alanine pocket. 147-150 contacts ATP; the sequence is GQKD. Gln153 is a binding site for (R)-pantoate. ATP contacts are provided by residues Val176 and 184 to 187; that span reads MSSR.

The protein belongs to the pantothenate synthetase family. As to quaternary structure, homodimer.

The protein localises to the cytoplasm. It catalyses the reaction (R)-pantoate + beta-alanine + ATP = (R)-pantothenate + AMP + diphosphate + H(+). It functions in the pathway cofactor biosynthesis; (R)-pantothenate biosynthesis; (R)-pantothenate from (R)-pantoate and beta-alanine: step 1/1. In terms of biological role, catalyzes the condensation of pantoate with beta-alanine in an ATP-dependent reaction via a pantoyl-adenylate intermediate. The polypeptide is Pantothenate synthetase 1 (Bradyrhizobium diazoefficiens (strain JCM 10833 / BCRC 13528 / IAM 13628 / NBRC 14792 / USDA 110)).